A 422-amino-acid chain; its full sequence is Histidine--tRNA ligase (422 aa).

It belongs to the class-II aminoacyl-tRNA synthetase family. In terms of assembly, homodimer.

The protein localises to the cytoplasm. It carries out the reaction tRNA(His) + L-histidine + ATP = L-histidyl-tRNA(His) + AMP + diphosphate + H(+). The sequence is that of Histidine--tRNA ligase from Ruthia magnifica subsp. Calyptogena magnifica.